Consider the following 125-residue polypeptide: Mating factor alpha (125 aa).

An N-terminal signal peptide occupies residues 1 to 22 (MKLFTTLSASLIFIHSLGSTRA). Residues N57 and N67 are each glycosylated (N-linked (GlcNAc...) asparagine).

This Lachancea kluyveri (Yeast) protein is Mating factor alpha.